We begin with the raw amino-acid sequence, 209 residues long: MQSKFIVIEGLDGAGKSTAISFVRKYLEKNNLAAIYTREPGGTKIAEELRNLVLHNKYDEEIHSDSELLMIYAGRVQHYRNLIAPALEKGINVVSDRFYWSSMAYQGGGRGVELSKIRALNDNFLNGCEPDLVIYLDIDPILGLQRAQKVGSPDRIEKAGLEFFNRTRNVFKDLVKDSDNAIEIDAAKSIQEVEKQIYLILDKHFNFQN.

Position 10–17 (10–17) interacts with ATP; it reads GLDGAGKS.

The protein belongs to the thymidylate kinase family.

The catalysed reaction is dTMP + ATP = dTDP + ADP. Functionally, phosphorylation of dTMP to form dTDP in both de novo and salvage pathways of dTTP synthesis. The chain is Thymidylate kinase from Francisella tularensis subsp. novicida (strain U112).